The sequence spans 119 residues: Small ribosomal subunit protein uS17 (119 aa).

Low complexity predominate over residues 1–21; sequence MAEAKTGAKATKSAAAGAADG. The interval 1-44 is disordered; that stretch reads MAEAKTGAKATKSAAAGAADGASKEKGPKHTPSTPKPRGRRKTR.

It belongs to the universal ribosomal protein uS17 family. As to quaternary structure, part of the 30S ribosomal subunit.

One of the primary rRNA binding proteins, it binds specifically to the 5'-end of 16S ribosomal RNA. The polypeptide is Small ribosomal subunit protein uS17 (Mycobacterium marinum (strain ATCC BAA-535 / M)).